A 384-amino-acid chain; its full sequence is Chorismate synthase (384 aa).

NADP(+) contacts are provided by Arg40 and Arg46. FMN-binding positions include 127–129 (RTS), 247–248 (QA), Ala292, 307–311 (KPIPT), and Arg333.

Belongs to the chorismate synthase family. As to quaternary structure, homotetramer. Requires FMNH2 as cofactor.

It carries out the reaction 5-O-(1-carboxyvinyl)-3-phosphoshikimate = chorismate + phosphate. It participates in metabolic intermediate biosynthesis; chorismate biosynthesis; chorismate from D-erythrose 4-phosphate and phosphoenolpyruvate: step 7/7. Its function is as follows. Catalyzes the anti-1,4-elimination of the C-3 phosphate and the C-6 proR hydrogen from 5-enolpyruvylshikimate-3-phosphate (EPSP) to yield chorismate, which is the branch point compound that serves as the starting substrate for the three terminal pathways of aromatic amino acid biosynthesis. This reaction introduces a second double bond into the aromatic ring system. This chain is Chorismate synthase, found in Alkaliphilus oremlandii (strain OhILAs) (Clostridium oremlandii (strain OhILAs)).